The following is a 74-amino-acid chain: Small ribosomal subunit protein bS20c (74 aa).

It belongs to the bacterial ribosomal protein bS20 family.

It localises to the plastid. The protein localises to the chloroplast. In terms of biological role, binds directly to 16S ribosomal RNA. This Cyanidioschyzon merolae (strain NIES-3377 / 10D) (Unicellular red alga) protein is Small ribosomal subunit protein bS20c.